Reading from the N-terminus, the 109-residue chain is Putative double-stranded DNA mimic protein plu2488 (109 aa).

This sequence belongs to the putative dsDNA mimic protein family.

Its function is as follows. May act as a double-stranded DNA (dsDNA) mimic. Probably regulates the activity of a dsDNA-binding protein. In Photorhabdus laumondii subsp. laumondii (strain DSM 15139 / CIP 105565 / TT01) (Photorhabdus luminescens subsp. laumondii), this protein is Putative double-stranded DNA mimic protein plu2488.